The sequence spans 395 residues: Gastric triacylglycerol lipase (395 aa).

Positions 1 to 18 (MWLLLITSVISTFGGAHG) are cleaved as a signal peptide. 3 N-linked (GlcNAc...) asparagine glycosylation sites follow: Asn-33, Asn-68, and Asn-98. In terms of domain architecture, AB hydrolase-1 spans 77 to 376 (PVVYLQHGLI…LAYNHLDFIW (300 aa)). The Nucleophile role is filled by Ser-171. A disulfide bond links Cys-245 and Cys-254. A glycan (N-linked (GlcNAc...) asparagine) is linked at Asn-270. Catalysis depends on charge relay system residues Asp-342 and His-371.

The protein belongs to the AB hydrolase superfamily. Lipase family. In terms of tissue distribution, secreted by the serous (von Ebner's) glands at the back of the rat tongue.

It localises to the secreted. The enzyme catalyses a triacylglycerol + H2O = a diacylglycerol + a fatty acid + H(+). The catalysed reaction is 1,2,3-tri-(9Z-octadecenoyl)-glycerol + H2O = 1,2-di-(9Z-octadecenoyl)-sn-glycerol + (9Z)-octadecenoate + H(+). It catalyses the reaction 1,2,3-trioctanoylglycerol + H2O = 1,2-dioctanoyl-sn-glycerol + octanoate + H(+). Functionally, catalyzes the hydrolysis of triacylglycerols to yield free fatty acids, diacylglycerol, monoacylglycerol, and glycerol. Shows a preferential hydrolysis at the sn-3 position of triacylglycerol. This Rattus norvegicus (Rat) protein is Gastric triacylglycerol lipase (Lipf).